We begin with the raw amino-acid sequence, 659 residues long: Threonine--tRNA ligase (659 aa).

The region spanning 1–61 (MSAVPELRIT…ADGDVVEEIR (61 aa)) is the TGS domain. The segment at 260 to 555 (DHRKLGVELD…LLEHYAGAFP (296 aa)) is catalytic. Zn(2+)-binding residues include Cys-353, His-404, and His-532.

It belongs to the class-II aminoacyl-tRNA synthetase family. As to quaternary structure, homodimer. Zn(2+) serves as cofactor.

Its subcellular location is the cytoplasm. The enzyme catalyses tRNA(Thr) + L-threonine + ATP = L-threonyl-tRNA(Thr) + AMP + diphosphate + H(+). In terms of biological role, catalyzes the attachment of threonine to tRNA(Thr) in a two-step reaction: L-threonine is first activated by ATP to form Thr-AMP and then transferred to the acceptor end of tRNA(Thr). Also edits incorrectly charged L-seryl-tRNA(Thr). The chain is Threonine--tRNA ligase from Thermobifida fusca (strain YX).